The primary structure comprises 168 residues: G/U mismatch-specific DNA glycosylase (168 aa).

This sequence belongs to the uracil-DNA glycosylase (UDG) superfamily. TDG/mug family. Binds DNA as a monomer.

It is found in the cytoplasm. It carries out the reaction Specifically hydrolyzes mismatched double-stranded DNA and polynucleotides, releasing free uracil.. Its function is as follows. Excises ethenocytosine and uracil, which can arise by alkylation or deamination of cytosine, respectively, from the corresponding mispairs with guanine in ds-DNA. It is capable of hydrolyzing the carbon-nitrogen bond between the sugar-phosphate backbone of the DNA and the mispaired base. The complementary strand guanine functions in substrate recognition. Required for DNA damage lesion repair in stationary-phase cells. The protein is G/U mismatch-specific DNA glycosylase of Klebsiella pneumoniae subsp. pneumoniae (strain ATCC 700721 / MGH 78578).